Here is a 140-residue protein sequence, read N- to C-terminus: uncharacterized protein (140 aa).

This is an uncharacterized protein from Mycoplasma pneumoniae (strain ATCC 29342 / M129 / Subtype 1) (Mycoplasmoides pneumoniae).